Consider the following 680-residue polypeptide: Dipeptidyl carboxypeptidase (680 aa).

Zn(2+) is bound at residue His469. Glu470 is a catalytic residue. Residues His473 and His476 each contribute to the Zn(2+) site.

This sequence belongs to the peptidase M3 family. It depends on Zn(2+) as a cofactor.

The protein resides in the cytoplasm. It catalyses the reaction Hydrolysis of unblocked, C-terminal dipeptides from oligopeptides, with broad specificity. Does not hydrolyze bonds in which P1' is Pro, or both P1 and P1' are Gly.. In terms of biological role, removes dipeptides from the C-termini of N-blocked tripeptides, tetrapeptides and larger peptides. The protein is Dipeptidyl carboxypeptidase (dcp) of Salmonella typhimurium (strain LT2 / SGSC1412 / ATCC 700720).